A 355-amino-acid chain; its full sequence is Ataxin-3-like protein (355 aa).

Positions 1–180 constitute a Josephin domain; it reads MDFIFHEKQE…DCEADQLLQI (180 aa). The active-site Nucleophile is cysteine 14. Histidine 119 (proton acceptor) is an active-site residue. Asparagine 134 is an active-site residue. Disordered stretches follow at residues 209-230 and 253-331; these read LEKV…EDFQ and LSMQ…DISE. Residues 215-228 are compositionally biased toward acidic residues; that stretch reads ESDESGTSDQDEED. UIM domains follow at residues 224–243 and 244–258; these read QDEE…TNRE and DEHL…MQGS. The span at 253–276 shows a compositional bias: polar residues; that stretch reads LSMQGSSGNTSQDLPKTSCVTPAS. The segment covering 278 to 293 has biased composition (basic and acidic residues); the sequence is QPKKIKEDYFEKHQQE.

In terms of tissue distribution, widely expressed.

The protein resides in the nucleus. It carries out the reaction Thiol-dependent hydrolysis of ester, thioester, amide, peptide and isopeptide bonds formed by the C-terminal Gly of ubiquitin (a 76-residue protein attached to proteins as an intracellular targeting signal).. In terms of biological role, deubiquitinating enzyme that cleaves both 'Lys-48'-linked and 'Lys-63'-linked poly-ubiquitin chains (in vitro). Acts as a deubiquitinating enzyme for the transcription factor KLF5, playing a role in the regulation of KLF5 stability. This Homo sapiens (Human) protein is Ataxin-3-like protein.